Reading from the N-terminus, the 423-residue chain is MTAQSTSLTQSLAQLDPEVAAAVDAELARQRDTLEMIASENFAPRAVLEAQGTVLTNKYAEGYPGRRYYGGCEHVDVIEQLAIDRAKALFGAEHANVQPHSGAQANTAVYFALLQPGDTILGLDLAHGGHLTHGMRINYSGKILNAVAYHVRESDGLIDYDEVEALAKEHQPKLIIAGWSAYPRQLDFARFREIADQTGALLMVDMAHFAGLVAAGLHPNPVPYADVVTTTTHKTLGGPRGGLILAKEELGKKINSAVFPGMQGGPLQHVIAAKAVALKVAASEEFAERQRRTLSGAKILAERLTQPDAAEAGIRVLTGGTDVHLVLVDLVNSELNGKEAEDRLHEIGITVNRNAVPNDPRPPMVTSGLRIGTPALATRGFGDADFAEVADIIAEALKPGFDAATLRSRVQALAAKHPLYPGL.

Residues L125 and 129–131 (GHL) each bind (6S)-5,6,7,8-tetrahydrofolate. K234 carries the N6-(pyridoxal phosphate)lysine modification. (6S)-5,6,7,8-tetrahydrofolate is bound at residue E249.

This sequence belongs to the SHMT family. As to quaternary structure, homodimer. Pyridoxal 5'-phosphate is required as a cofactor.

The protein resides in the cytoplasm. The enzyme catalyses (6R)-5,10-methylene-5,6,7,8-tetrahydrofolate + glycine + H2O = (6S)-5,6,7,8-tetrahydrofolate + L-serine. The protein operates within one-carbon metabolism; tetrahydrofolate interconversion. Its pathway is amino-acid biosynthesis; glycine biosynthesis; glycine from L-serine: step 1/1. In terms of biological role, catalyzes the reversible interconversion of serine and glycine with tetrahydrofolate (THF) serving as the one-carbon carrier. This reaction serves as the major source of one-carbon groups required for the biosynthesis of purines, thymidylate, methionine, and other important biomolecules. Also exhibits THF-independent aldolase activity toward beta-hydroxyamino acids, producing glycine and aldehydes, via a retro-aldol mechanism. The protein is Serine hydroxymethyltransferase of Thermobifida fusca (strain YX).